Reading from the N-terminus, the 200-residue chain is Putative 3-methyladenine DNA glycosylase (200 aa).

It belongs to the DNA glycosylase MPG family.

The protein is Putative 3-methyladenine DNA glycosylase of Shouchella clausii (strain KSM-K16) (Alkalihalobacillus clausii).